A 261-amino-acid polypeptide reads, in one-letter code: tRNA (guanine-N(7)-)-methyltransferase (261 aa).

Positions 75, 100, 127, and 150 each coordinate S-adenosyl-L-methionine. Asp-150 is a catalytic residue. Lys-154 lines the substrate pocket. An interaction with RNA region spans residues 156 to 161 (RHNKRR). Substrate-binding positions include Asp-186 and 223–226 (THFE).

It belongs to the class I-like SAM-binding methyltransferase superfamily. TrmB family.

The catalysed reaction is guanosine(46) in tRNA + S-adenosyl-L-methionine = N(7)-methylguanosine(46) in tRNA + S-adenosyl-L-homocysteine. It functions in the pathway tRNA modification; N(7)-methylguanine-tRNA biosynthesis. In terms of biological role, catalyzes the formation of N(7)-methylguanine at position 46 (m7G46) in tRNA. The chain is tRNA (guanine-N(7)-)-methyltransferase from Xanthomonas axonopodis pv. citri (strain 306).